Consider the following 486-residue polypeptide: MILEHRKQEERREDHSKRVVKERQLEANLSCEDRIERKRLLRKLQDEEYGKQIEESLLRAEEDKLFRERQLEQEERMAKELARINNEKLRDEKMRQYIKENSVELRELELKLKSAYLNRERAAQMAEKEAMRYETLREEAMIARTMRDEHELAEMEKEKLEQKKYEEVVRYQQELERQLEEKERKRQEAYEEFLKEKHMVDEIVRKIYMEDQMELQLQLDKMKATQRYIEDFKKQQAEWRRMEREKVEAENRRIIEFAQYQQRKEEDRMAKVREREQAKETLHKMLSEQIELEKQQREKMERAREELCLEEQAEAARQQEIEEMEKRIRQRLELQQTQQEMMAFKKLRLQEEKEEEEAFRQMMMAKFAEDDRIEQMNAQKRRMKQLEHKRAVEQLLEERRQQYLAEQEREEQERAVELEREAQRRKIIEEERQRLLKQHATKLLGYLPKGIFKEEDLEHFDEDFKSNFKQRQADIFSDEGWGDDSQ.

Coiled-coil stretches lie at residues 52–198 (QIEE…KEKH) and 230–440 (EDFK…KQHA).

Belongs to the MNS1 family.

It is found in the nucleus. Its subcellular location is the cytoplasm. It localises to the cytoskeleton. The protein resides in the cilium axoneme. The protein localises to the flagellum axoneme. Functionally, microtubule inner protein (MIP) part of the dynein-decorated doublet microtubules (DMTs) in cilia axoneme, which is required for motile cilia beating. May play a role in the control of meiotic division and germ cell differentiation through regulation of pairing and recombination during meiosis. Required for sperm flagella assembly. May play a role in the assembly and function of the outer dynein arm-docking complex (ODA-DC). ODA-DC mediates outer dynein arms (ODA) binding onto the axonemal doublet microtubules. This is Meiosis-specific nuclear structural protein 1 (mns1) from Danio rerio (Zebrafish).